An 852-amino-acid polypeptide reads, in one-letter code: Bifunctional heparan sulfate N-deacetylase/N-sulfotransferase 1 (852 aa).

Topologically, residues 1-13 (MIITPYLNRKITR) are cytoplasmic. Residues 14–34 (PLKWILALIFLYLIYICLFSN) traverse the membrane as a helical; Signal-anchor for type II membrane protein segment. The segment at 34–574 (NNSKPPKPRK…PRHHAILPPS (541 aa)) is heparan sulfate N-deacetylase 1. The Lumenal segment spans residues 35–852 (NSKPPKPRKK…WLEESVRIRA (818 aa)). N-linked (GlcNAc...) asparagine glycosylation is found at N50, N72, N261, N328, N377, N428, and N576. The interval 575 to 852 (INCTKKSLPD…WLEESVRIRA (278 aa)) is heparan sulfate N-sulfotransferase 1. Residue K592 is the For sulfotransferase activity of the active site. Residue 592–596 (KTGST) coordinates 3'-phosphoadenylyl sulfate. Residue N607 is glycosylated (N-linked (GlcNAc...) asparagine). A 3'-phosphoadenylyl sulfate-binding site is contributed by S686. A glycan (N-linked (GlcNAc...) asparagine) is linked at N712. A disulfide bridge connects residues C789 and C798. 803-807 (KGRKY) lines the 3'-phosphoadenylyl sulfate pocket.

It belongs to the sulfotransferase 1 family. NDST subfamily. Monomer. Present in some specific neurons in head and tail regions and muscles.

It localises to the golgi apparatus membrane. The catalysed reaction is alpha-D-glucosaminyl-[heparan sulfate](n) + 3'-phosphoadenylyl sulfate = N-sulfo-alpha-D-glucosaminyl-[heparan sulfate](n) + adenosine 3',5'-bisphosphate + 2 H(+). It functions in the pathway glycan metabolism; heparan sulfate biosynthesis. The protein operates within glycan metabolism; heparin biosynthesis. Its function is as follows. Essential bifunctional enzyme that catalyzes both the N-deacetylation and the N-sulfation of glucosamine (GlcNAc) of the glycosaminoglycan in heparan sulfate. Modifies the GlcNAc-GlcA disaccharide repeating sugar backbone to make N-sulfated heparosan, a prerequisite substrate for later modifications in heparin biosynthesis. This Caenorhabditis elegans protein is Bifunctional heparan sulfate N-deacetylase/N-sulfotransferase 1 (hst-1).